The chain runs to 243 residues: Tegument protein UL14 homolog (243 aa).

Belongs to the alphaherpesvirinae HHV-1 UL14 protein family. Post-translationally, phosphorylated.

It is found in the virion tegument. Its subcellular location is the host cytoplasm. The protein resides in the host nucleus. Functionally, contributes to the nuclear transport of the viral transcriptional activator VP16 homolog during the early phase of infection. Therefore, participates indirectly in the regulation of the immediate-early gene expression. Additionally, seems to be important for efficient nuclear targeting of capsids. The protein is Tegument protein UL14 homolog (MDV026) of Gallid herpesvirus 2 (strain Chicken/Md5/ATCC VR-987) (GaHV-2).